The sequence spans 164 residues: MDLNYQVFTSISKNWWSASLVPVACGWFIGNSYKPRKDYENKKQPKFHPPASAFGPAWTLLYLTMGYASHLAYKADPLMITNASRNGSILYIAQLAANFAWMPLFYGLAKPKLALADLGILTGLVGWLAKTWWPLAPTASKWLIPYLAWLGYAGYLNLGYCLLN.

Transmembrane regions (helical) follow at residues 16–34 (WSAS…NSYK), 52–72 (SAFG…SHLA), 89–106 (ILYI…PLFY), 112–132 (KLAL…AKTW), and 141–163 (KWLI…YCLL).

Belongs to the TspO/BZRP family.

The protein localises to the mitochondrion membrane. Functionally, may play a role in the transport of porphyrins and heme. The polypeptide is Translocator protein homolog (Schizosaccharomyces pombe (strain 972 / ATCC 24843) (Fission yeast)).